The sequence spans 116 residues: U16-barytoxin-Tl1f (116 aa).

A signal peptide spans 1–20 (MKTIIVFLSLLVLATKFGDA). Residues 21–74 (NEGVNQEQMKEVIQNEFREDFLNEMAAMSLLQQLEAIESTLLEKEADRNSRQKR) constitute a propeptide that is removed on maturation. Cystine bridges form between Cys-75–Cys-90, Cys-82–Cys-95, and Cys-89–Cys-110. Asn-85 is a glycosylation site (N-linked (GlcNAc...) asparagine).

Belongs to the neurotoxin 14 (magi-1) family. 06 (ICK-Trit) subfamily. As to expression, expressed by the venom gland.

The protein localises to the secreted. Ion channel inhibitor. In Trittame loki (Brush-footed trapdoor spider), this protein is U16-barytoxin-Tl1f.